The following is a 695-amino-acid chain: UvrABC system protein B (695 aa).

The Helicase ATP-binding domain occupies 25–176 (KSISEGHRFQ…NQRDVLRDLA (152 aa)). Position 38–45 (38–45 (GATGTGKT)) interacts with ATP. Positions 91-114 (YYDYYQPEAYVPSTDTYIAKSSSI) match the Beta-hairpin motif. Residues 454-617 (LLGEIYLRLE…ITPKPIVKKN (164 aa)) form the Helicase C-terminal domain. The UVR domain maps to 652-687 (PELIGQLELKMKEAAKNLEFEEAAQLRDRIKKLRQR).

The protein belongs to the UvrB family. As to quaternary structure, forms a heterotetramer with UvrA during the search for lesions. Interacts with UvrC in an incision complex.

It localises to the cytoplasm. Its function is as follows. The UvrABC repair system catalyzes the recognition and processing of DNA lesions. A damage recognition complex composed of 2 UvrA and 2 UvrB subunits scans DNA for abnormalities. Upon binding of the UvrA(2)B(2) complex to a putative damaged site, the DNA wraps around one UvrB monomer. DNA wrap is dependent on ATP binding by UvrB and probably causes local melting of the DNA helix, facilitating insertion of UvrB beta-hairpin between the DNA strands. Then UvrB probes one DNA strand for the presence of a lesion. If a lesion is found the UvrA subunits dissociate and the UvrB-DNA preincision complex is formed. This complex is subsequently bound by UvrC and the second UvrB is released. If no lesion is found, the DNA wraps around the other UvrB subunit that will check the other stand for damage. The chain is UvrABC system protein B from Synechococcus sp. (strain JA-2-3B'a(2-13)) (Cyanobacteria bacterium Yellowstone B-Prime).